The primary structure comprises 159 residues: Ribosomal RNA large subunit methyltransferase H (159 aa).

S-adenosyl-L-methionine-binding positions include leucine 76, glycine 108, and 127–132 (FGLLTL).

The protein belongs to the RNA methyltransferase RlmH family. As to quaternary structure, homodimer.

It is found in the cytoplasm. The enzyme catalyses pseudouridine(1915) in 23S rRNA + S-adenosyl-L-methionine = N(3)-methylpseudouridine(1915) in 23S rRNA + S-adenosyl-L-homocysteine + H(+). Functionally, specifically methylates the pseudouridine at position 1915 (m3Psi1915) in 23S rRNA. This chain is Ribosomal RNA large subunit methyltransferase H, found in Streptococcus equi subsp. zooepidemicus (strain MGCS10565).